We begin with the raw amino-acid sequence, 510 residues long: GMP synthase [glutamine-hydrolyzing] (510 aa).

In terms of domain architecture, Glutamine amidotransferase type-1 spans 5–195; the sequence is LVIVVDFGGQ…LYEICKADGD (191 aa). The Nucleophile role is filled by C82. Active-site residues include H169 and E171. Residues 196–385 enclose the GMPS ATP-PPase domain; that stretch reads WTMENFLEEQ…LEMPEYLVYR (190 aa). 223-229 contributes to the ATP binding site; that stretch reads SGGVDSS.

In terms of assembly, homodimer.

The catalysed reaction is XMP + L-glutamine + ATP + H2O = GMP + L-glutamate + AMP + diphosphate + 2 H(+). Its pathway is purine metabolism; GMP biosynthesis; GMP from XMP (L-Gln route): step 1/1. In terms of biological role, catalyzes the synthesis of GMP from XMP. The sequence is that of GMP synthase [glutamine-hydrolyzing] from Finegoldia magna (strain ATCC 29328 / DSM 20472 / WAL 2508) (Peptostreptococcus magnus).